The chain runs to 928 residues: Inner tegument protein (928 aa).

Residues 482–928 (WGGAVPANLA…LAGLRKLFVE (447 aa)) form an interaction with large tegument protein region.

The protein belongs to the herpesviridae inner tegument protein family. In terms of assembly, interacts (via C-terminus) with the large tegument protein/LTP (via N-terminus).

It is found in the virion tegument. Its subcellular location is the host cytoplasm. The protein resides in the host nucleus. It localises to the host Golgi apparatus. The protein localises to the host trans-Golgi network. Functionally, plays an essential role in cytoplasmic secondary envelopment during viral egress. Interacts with the capsid via the large tegument protein/LTP and participates in its transport to the host trans-Golgi network (TGN) where secondary envelopment occurs. Modulates tegumentation and capsid accumulation at the viral assembly complex. The chain is Inner tegument protein (ORF63) from Homo sapiens (Human).